A 509-amino-acid chain; its full sequence is Maturase K (509 aa).

This sequence belongs to the intron maturase 2 family. MatK subfamily.

The protein resides in the plastid. The protein localises to the chloroplast. Usually encoded in the trnK tRNA gene intron. Probably assists in splicing its own and other chloroplast group II introns. The sequence is that of Maturase K from Nicotiana sylvestris (Wood tobacco).